We begin with the raw amino-acid sequence, 433 residues long: 3-phosphoshikimate 1-carboxyvinyltransferase (433 aa).

The 3-phosphoshikimate site is built by lysine 23, serine 24, and arginine 28. Residue lysine 23 participates in phosphoenolpyruvate binding. 2 residues coordinate phosphoenolpyruvate: glycine 95 and arginine 123. 3-phosphoshikimate contacts are provided by serine 167, glutamine 169, aspartate 317, and lysine 344. Residue glutamine 169 coordinates phosphoenolpyruvate. The active-site Proton acceptor is aspartate 317. The phosphoenolpyruvate site is built by arginine 348 and arginine 390.

This sequence belongs to the EPSP synthase family. In terms of assembly, monomer.

Its subcellular location is the cytoplasm. It catalyses the reaction 3-phosphoshikimate + phosphoenolpyruvate = 5-O-(1-carboxyvinyl)-3-phosphoshikimate + phosphate. It functions in the pathway metabolic intermediate biosynthesis; chorismate biosynthesis; chorismate from D-erythrose 4-phosphate and phosphoenolpyruvate: step 6/7. Functionally, catalyzes the transfer of the enolpyruvyl moiety of phosphoenolpyruvate (PEP) to the 5-hydroxyl of shikimate-3-phosphate (S3P) to produce enolpyruvyl shikimate-3-phosphate and inorganic phosphate. This chain is 3-phosphoshikimate 1-carboxyvinyltransferase, found in Staphylococcus epidermidis (strain ATCC 35984 / DSM 28319 / BCRC 17069 / CCUG 31568 / BM 3577 / RP62A).